The sequence spans 141 residues: Endoribonuclease YbeY (141 aa).

3 residues coordinate Zn(2+): His100, His104, and His110.

This sequence belongs to the endoribonuclease YbeY family. Zn(2+) is required as a cofactor.

It is found in the cytoplasm. Its function is as follows. Single strand-specific metallo-endoribonuclease involved in late-stage 70S ribosome quality control and in maturation of the 3' terminus of the 16S rRNA. This chain is Endoribonuclease YbeY, found in Helicobacter pylori (strain J99 / ATCC 700824) (Campylobacter pylori J99).